Consider the following 331-residue polypeptide: DNA-directed RNA polymerase subunit alpha (331 aa).

Positions 1-233 are alpha N-terminal domain (alpha-NTD); the sequence is MVREKVTVST…DLFIPFLHAE (233 aa). An alpha C-terminal domain (alpha-CTD) region spans residues 265–331; it reads KEIELKYIFI…GILEKHFTID (67 aa).

The protein belongs to the RNA polymerase alpha chain family. In terms of assembly, in plastids the minimal PEP RNA polymerase catalytic core is composed of four subunits: alpha, beta, beta', and beta''. When a (nuclear-encoded) sigma factor is associated with the core the holoenzyme is formed, which can initiate transcription.

It is found in the plastid. Its subcellular location is the chloroplast. The enzyme catalyses RNA(n) + a ribonucleoside 5'-triphosphate = RNA(n+1) + diphosphate. Functionally, DNA-dependent RNA polymerase catalyzes the transcription of DNA into RNA using the four ribonucleoside triphosphates as substrates. The chain is DNA-directed RNA polymerase subunit alpha from Vitis vinifera (Grape).